Consider the following 348-residue polypeptide: Peroxidase 40 (348 aa).

The first 21 residues, 1–21 (MKNLFNLFLMFFFAMPILSLS), serve as a signal peptide directing secretion. The N-linked (GlcNAc...) asparagine glycan is linked to Asn-26. Intrachain disulfides connect Cys-59-Cys-139, Cys-92-Cys-97, Cys-145-Cys-344, and Cys-224-Cys-256. The active-site Proton acceptor is the His-90. Ca(2+) contacts are provided by Asp-91, Val-94, Gly-96, Asp-98, and Ser-100. Positions 170 to 189 (GRKDSRTASKQAATNGLPSP) are disordered. Positions 177–189 (ASKQAATNGLPSP) are enriched in polar residues. Pro-187 provides a ligand contact to substrate. The N-linked (GlcNAc...) asparagine glycan is linked to Asn-190. His-217 contributes to the heme b binding site. Residue Thr-218 participates in Ca(2+) binding. Residues Asp-269, Thr-272, and Asp-277 each contribute to the Ca(2+) site.

Belongs to the peroxidase family. Classical plant (class III) peroxidase subfamily. The cofactor is heme b. Requires Ca(2+) as cofactor.

The protein resides in the secreted. It catalyses the reaction 2 a phenolic donor + H2O2 = 2 a phenolic radical donor + 2 H2O. Removal of H(2)O(2), oxidation of toxic reductants, biosynthesis and degradation of lignin, suberization, auxin catabolism, response to environmental stresses such as wounding, pathogen attack and oxidative stress. These functions might be dependent on each isozyme/isoform in each plant tissue. The polypeptide is Peroxidase 40 (PER40) (Arabidopsis thaliana (Mouse-ear cress)).